We begin with the raw amino-acid sequence, 540 residues long: [Co(II) methylated amine-specific corrinoid protein] reductase (540 aa).

4Fe-4S ferredoxin-type domains lie at 471–500 (IILE…IVER) and 504–535 (RIAK…ITKL). 8 residues coordinate [4Fe-4S] cluster: Cys-480, Cys-483, Cys-486, Cys-490, Cys-513, Cys-518, Cys-521, and Cys-525.

In terms of assembly, monomer. [4Fe-4S] cluster is required as a cofactor.

It carries out the reaction 2 Co(II)-[methylamine-specific corrinoid protein] + AH2 + ATP + H2O = 2 Co(I)-[methylamine-specific corrinoid protein] + A + ADP + phosphate + 3 H(+). The enzyme catalyses 2 Co(II)-[dimethylamine-specific corrinoid protein] + AH2 + ATP + H2O = 2 Co(I)-[dimethylamine-specific corrinoid protein] + A + ADP + phosphate + 3 H(+). The catalysed reaction is 2 Co(II)-[trimethylamine-specific corrinoid protein] + AH2 + ATP + H2O = 2 Co(I)-[trimethylamine-specific corrinoid protein] + A + ADP + phosphate + 3 H(+). It functions in the pathway one-carbon metabolism; methanogenesis from methylamine. Its pathway is one-carbon metabolism; methanogenesis from dimethylamine. The protein operates within one-carbon metabolism; methanogenesis from trimethylamine. In terms of biological role, reductase required for the activation of corrinoid-dependent methylamine methyltransferase reactions during methanogenesis. Mediates the ATP-dependent reduction of corrinoid proteins from the inactive cobalt(II) state to the active cobalt(I) state. Acts on the corrinoid proteins involved in methanogenesis from monomethylamine (MMA), dimethylamine (DMA) and trimethylamine (TMA), namely MtmC, MtbC and MttC, respectively. The polypeptide is [Co(II) methylated amine-specific corrinoid protein] reductase (Methanosarcina barkeri).